We begin with the raw amino-acid sequence, 481 residues long: O-acetyltransferase andG (481 aa).

The protein belongs to the fumigaclavine B O-acetyltransferase family. As to quaternary structure, monomer.

It functions in the pathway secondary metabolite biosynthesis; terpenoid biosynthesis. Functionally, O-acetyltransferase; part of the gene cluster that mediates the biosynthesis of anditomin, a fungal meroterpenoid. The first step of the pathway is the synthesis of 3,5-dimethylorsellinic acid (DMOA) by the polyketide synthase andM. DMOA is then converted to the phthalide compound 5,7-dihydroxy-4,6-dimethylphthalide (DHDMP) by the cytochrome P450 monooxygenase andK, which is further prenylated by the prenyltransferase andD to yield farnesyl-DHDMP. Further epoxidation by the FAD-dependent monooxygenase andE leads to epoxyfarnesyl-DHDMP. The next step involves the terpene cyclase andB that converts epoxyfarnesyl-DHDMP into preandiloid A through opening of the epoxide ring followed by the cyclization of the farnesyl moiety. Preandiloid A is in turn oxidized at the C-3 hydroxyl group to yield preandiloid B by the dehydrogenase andC. The dioxygenase andA is solely responsible for the dehydrogenation of preandiloid B leading to the enone preandiloid C, as well as for the intriguing structural rearrangement to generate the bicyclo[2.2.2]octane core, transforming preandiloid C into andiconin. FAD-binding monooxygenase andJ then produces andilesin D which is reduced by dehydrogenase andI to yield andilesin A. Action of acetyltransferase andG followed by a spontaneous acetate elimination leads then to andilesin B, which is in turn substrate of the short chain dehydrogenase andH to yield andilesin C. Finally, the dioxygenase andF catalyzes the transformation of andilesin C to anditomin. The chain is O-acetyltransferase andG from Emericella variicolor (Aspergillus stellatus).